Consider the following 426-residue polypeptide: uncharacterized protein (426 aa).

H277 provides a ligand contact to Zn(2+). Residue E278 is part of the active site. Positions 281 and 357 each coordinate Zn(2+).

It belongs to the peptidase M48B family. Requires Zn(2+) as cofactor.

This is an uncharacterized protein from Bacillus subtilis (strain 168).